Reading from the N-terminus, the 128-residue chain is Small ribosomal subunit protein eS8 (128 aa).

The protein belongs to the eukaryotic ribosomal protein eS8 family. In terms of assembly, part of the 30S ribosomal subunit.

The protein is Small ribosomal subunit protein eS8 of Methanococcus maripaludis (strain C7 / ATCC BAA-1331).